The sequence spans 1213 residues: SWI/SNF complex subunit SMARCC2 (1213 aa).

The marR-like, BRCT and chromo domains module stretch occupies residues 1–274 (MAVRKKDGGP…PVSRRKKISA (274 aa)). Residues 10 to 136 (PNVKYYEAAD…IEKSLVQNNC (127 aa)) enclose the MarR-like domain. One can recognise a BRCT; N-terminus domain in the interval 140 to 183 (PNIFLCPEIEPKLLGKLKDIVKRHQGTISEDKSNASHVVYPVPG). Positions 189-217 (EWVRPVMKRDKQVLLHWGYYPDSYDTWIP) constitute a Chromo domain. The region spanning 233–257 (KPRKVHAKWILDTDTFNEWMNEEDY) is the BRCT; C-terminus domain. The segment at 256-413 (DYEVSDDKSP…GEQTKNPDLH (158 aa)) is disordered. The span at 275–284 (KTLTDEVNSP) shows a compositional bias: polar residues. S283, S286, S302, S304, and S306 each carry phosphoserine. K312 carries the N6-(ADP-ribosyl)lysine modification. K326 is modified (N6-acetyllysine). Residues 331-344 (HREEEQEDLTKDMD) show a composition bias toward basic and acidic residues. Phosphoserine occurs at positions 347 and 387. The span at 379-398 (DLDEQDDESMETTGKDEDEN) shows a compositional bias: acidic residues. The SWIRM domain occupies 424-521 (IIIPSYAAWF…YQVDAESRPT (98 aa)). Residues K564, K566, K568, and K592 each participate in a glycyl lysine isopeptide (Lys-Gly) (interchain with G-Cter in SUMO2) cross-link. The region spanning 596-647 (SATREWTEQETLLLLEALEMYKDDWNKVSEHVGSRTQDECILHFLRLPIEDP) is the SANT domain. K704 participates in a covalent cross-link: Glycyl lysine isopeptide (Lys-Gly) (interchain with G-Cter in SUMO2). Residues 724-848 (KVTGKADPAF…AEPEGERKTK (125 aa)) form a disordered region. Residues 747–777 (EPERIEESGTEEARPEGQAADEKKEPKEPRE) are compositionally biased toward basic and acidic residues. Residue K787 forms a Glycyl lysine isopeptide (Lys-Gly) (interchain with G-Cter in SUMO2) linkage. A compositionally biased stretch (basic and acidic residues) spans 788–848 (EEISEVPKKD…AEPEGERKTK (61 aa)). Phosphoserine is present on S813. K848 participates in a covalent cross-link: Glycyl lysine isopeptide (Lys-Gly) (interchain with G-Cter in SUMO2). Residues 907–934 (EELETIMDREREALEYQRQQLLADRQAF) are a coiled coil. Disordered stretches follow at residues 947 to 1073 (RQQH…HPGV) and 1181 to 1213 (LPSA…PPPQ). Over residues 949-962 (QHFQQMHQQQQQQP) the composition is skewed to low complexity. A compositionally biased stretch (pro residues) spans 963-974 (PTLPPGSQPIPP). Residues 975–1033 (TGAAGPPTVHGLAVPPAAVASAPPGSGAPPGSLGPSEQIGQAGTTAGPQQPQQAGAPQP) show a composition bias toward low complexity. Composition is skewed to pro residues over residues 1034–1060 (GAVP…PPSM) and 1185–1201 (SPLP…PTAP).

Belongs to the SMARCC family. Component of the multiprotein chromatin-remodeling complexes SWI/SNF: SWI/SNF-A (BAF), SWI/SNF-B (PBAF) and related complexes. The canonical complex contains a catalytic subunit (either SMARCA4/BRG1/BAF190A or SMARCA2/BRM/BAF190B) and at least SMARCE1, ACTL6A/BAF53, SMARCC1/BAF155, SMARCC2/BAF170, and SMARCB1/SNF5/BAF47. Other subunits specific to each of the complexes may also be present permitting several possible combinations developmentally and tissue specific. Component of the BAF complex, which includes at least actin (ACTB), ARID1A/BAF250A, ARID1B/BAF250B, SMARCA2/BRM, SMARCA4/BRG1, ACTL6A/BAF53, ACTL6B/BAF53B, SMARCE1/BAF57, SMARCC1/BAF155, SMARCC2/BAF170, SMARCB1/SNF5/INI1, and one or more SMARCD1/BAF60A, SMARCD2/BAF60B, or SMARCD3/BAF60C. In muscle cells, the BAF complex also contains DPF3. Component of neural progenitors-specific chromatin remodeling complex (npBAF complex) composed of at least, ARID1A/BAF250A or ARID1B/BAF250B, SMARCD1/BAF60A, SMARCD3/BAF60C, SMARCA2/BRM/BAF190B, SMARCA4/BRG1/BAF190A, SMARCB1/BAF47, SMARCC1/BAF155, SMARCE1/BAF57, SMARCC2/BAF170, PHF10/BAF45A, ACTL6A/BAF53A and actin. Component of neuron-specific chromatin remodeling complex (nBAF complex) composed of at least, ARID1A/BAF250A or ARID1B/BAF250B, SMARCD1/BAF60A, SMARCD3/BAF60C, SMARCA2/BRM/BAF190B, SMARCA4/BRG1/BAF190A, SMARCB1/BAF47, SMARCC1/BAF155, SMARCE1/BAF57, SMARCC2/BAF170, DPF1/BAF45B, DPF3/BAF45C, ACTL6B/BAF53B and actin. Component of the SWI/SNF-B (PBAF) chromatin remodeling complex, at least composed of SMARCA4/BRG1, SMARCB1/BAF47/SNF5, ACTL6A/BAF53A or ACTL6B/BAF53B, SMARCE1/BAF57, SMARCD1/BAF60A, SMARCD2/BAF60B, perhaps SMARCD3/BAF60C, SMARCC1/BAF155, SMARCC2/BAF170, PBRM1/BAF180, ARID2/BAF200 and actin. May also interact with the SIN3A histone deacetylase transcription repressor complex in conjunction with SMARCA2 and SMARCA4. Interacts with SMARD1. Interacts with KDM6B. Interaction with RCOR1. Interacts with DPF2. Interacts with ERCC6. Interacts with FOS. In terms of processing, mono-ADP-ribosylation at Lys-312 by SIRT6 promotes recruitment to the enhancer region of the Heme oxygenase-1 (HO-1) locus, leading to transcription activation of the locus.

The protein localises to the nucleus. Functionally, involved in transcriptional activation and repression of select genes by chromatin remodeling (alteration of DNA-nucleosome topology). Component of SWI/SNF chromatin remodeling complexes that carry out key enzymatic activities, changing chromatin structure by altering DNA-histone contacts within a nucleosome in an ATP-dependent manner. Can stimulate the ATPase activity of the catalytic subunit of these complexes. May be required for CoREST dependent repression of neuronal specific gene promoters in non-neuronal cells. Belongs to the neural progenitors-specific chromatin remodeling complex (npBAF complex) and the neuron-specific chromatin remodeling complex (nBAF complex). During neural development a switch from a stem/progenitor to a postmitotic chromatin remodeling mechanism occurs as neurons exit the cell cycle and become committed to their adult state. The transition from proliferating neural stem/progenitor cells to postmitotic neurons requires a switch in subunit composition of the npBAF and nBAF complexes. As neural progenitors exit mitosis and differentiate into neurons, npBAF complexes which contain ACTL6A/BAF53A and PHF10/BAF45A, are exchanged for homologous alternative ACTL6B/BAF53B and DPF1/BAF45B or DPF3/BAF45C subunits in neuron-specific complexes (nBAF). The npBAF complex is essential for the self-renewal/proliferative capacity of the multipotent neural stem cells. The nBAF complex along with CREST plays a role regulating the activity of genes essential for dendrite growth. Critical regulator of myeloid differentiation, controlling granulocytopoiesis and the expression of genes involved in neutrophil granule formation. In Mus musculus (Mouse), this protein is SWI/SNF complex subunit SMARCC2 (Smarcc2).